We begin with the raw amino-acid sequence, 68 residues long: MQVSVRDNNVDQALRALKKKLQREGVFREMKLKQHYEKPSEKRAREKAEAIRRARKLARKKLQREGML.

The protein belongs to the bacterial ribosomal protein bS21 family.

The protein is Small ribosomal subunit protein bS21 of Jannaschia sp. (strain CCS1).